We begin with the raw amino-acid sequence, 168 residues long: Cyanate hydratase (168 aa).

Residues arginine 91, glutamate 94, and serine 117 contribute to the active site.

This sequence belongs to the cyanase family.

The enzyme catalyses cyanate + hydrogencarbonate + 3 H(+) = NH4(+) + 2 CO2. Functionally, catalyzes the reaction of cyanate with bicarbonate to produce ammonia and carbon dioxide. This chain is Cyanate hydratase, found in Arabidopsis thaliana (Mouse-ear cress).